A 189-amino-acid polypeptide reads, in one-letter code: Proline-rich protein 29 (189 aa).

The segment at 152-189 (SREREVRAVPPPPPPSATGTVGADVPPASDYYDAESLL) is disordered.

The protein is Proline-rich protein 29 (PRR29) of Homo sapiens (Human).